Here is a 184-residue protein sequence, read N- to C-terminus: Large ribosomal subunit protein uL22 (184 aa).

This sequence belongs to the universal ribosomal protein uL22 family. As to quaternary structure, part of the 50S ribosomal subunit.

In terms of biological role, this protein binds specifically to 23S rRNA. It makes multiple contacts with different domains of the 23S rRNA in the assembled 50S subunit and ribosome. Its function is as follows. The globular domain of the protein is located near the polypeptide exit tunnel on the outside of the subunit, while an extended beta-hairpin is found that lines the wall of the exit tunnel in the center of the 70S ribosome. The chain is Large ribosomal subunit protein uL22 from Pyrobaculum calidifontis (strain DSM 21063 / JCM 11548 / VA1).